A 166-amino-acid polypeptide reads, in one-letter code: Peroxynitrite isomerase Rv2717c (166 aa).

A GXWXGXG motif is present at residues 28 to 34; it reads GTWRGQG. Thr-40 and His-158 together coordinate heme b.

It belongs to the nitrobindin family. In terms of assembly, homodimer. Requires heme b as cofactor.

Its subcellular location is the cytoplasm. The enzyme catalyses peroxynitrite = nitrate. The protein operates within nitrogen metabolism. Heme-binding protein able to scavenge peroxynitrite and to protect free L-tyrosine against peroxynitrite-mediated nitration, by acting as a peroxynitrite isomerase that converts peroxynitrite to nitrate. Therefore, this protein likely plays a role in peroxynitrite sensing and in the detoxification of reactive nitrogen and oxygen species (RNS and ROS, respectively). Is able to bind nitric oxide (NO) in vitro, but may act as a sensor of peroxynitrite levels in vivo. In Arabidopsis thaliana (Mouse-ear cress), this protein is Peroxynitrite isomerase Rv2717c.